Reading from the N-terminus, the 306-residue chain is Dihydroorotate dehydrogenase B (NAD(+)), catalytic subunit (306 aa).

FMN contacts are provided by residues Ser22 and 46-47; that span reads KT. Residues Lys46, 70 to 74, and Asn128 contribute to the substrate site; that span reads NSIGL. FMN is bound at residue Asn128. Catalysis depends on Cys131, which acts as the Nucleophile. An FMN-binding site is contributed by Lys164. 191-192 contributes to the substrate binding site; it reads NT. FMN is bound by residues Gly216, 242–243, and 264–265; these read GG and GS.

The protein belongs to the dihydroorotate dehydrogenase family. Type 1 subfamily. Heterotetramer of 2 PyrK and 2 PyrD type B subunits. FMN is required as a cofactor.

Its subcellular location is the cytoplasm. The enzyme catalyses (S)-dihydroorotate + NAD(+) = orotate + NADH + H(+). Its pathway is pyrimidine metabolism; UMP biosynthesis via de novo pathway; orotate from (S)-dihydroorotate (NAD(+) route): step 1/1. Functionally, catalyzes the conversion of dihydroorotate to orotate with NAD(+) as electron acceptor. In Endomicrobium trichonymphae, this protein is Dihydroorotate dehydrogenase B (NAD(+)), catalytic subunit (pyrD).